Here is a 381-residue protein sequence, read N- to C-terminus: L-lactate dehydrogenase (381 aa).

The region spanning 1–380 (MIISSANDYR…TRDALVDLSK (380 aa)) is the FMN hydroxy acid dehydrogenase domain. Tyr-24 provides a ligand contact to substrate. Ser-106 and Gln-127 together coordinate FMN. A substrate-binding site is contributed by Tyr-129. Thr-155 lines the FMN pocket. A substrate-binding site is contributed by Arg-164. Lys-251 contributes to the FMN binding site. The active-site Proton acceptor is His-275. Arg-278 serves as a coordination point for substrate. 306 to 330 (DSGIRNGLDIVRMLALGADATMLGR) provides a ligand contact to FMN.

It belongs to the FMN-dependent alpha-hydroxy acid dehydrogenase family. It depends on FMN as a cofactor.

The protein localises to the cell inner membrane. It carries out the reaction (S)-lactate + A = pyruvate + AH2. Its function is as follows. Catalyzes the conversion of L-lactate to pyruvate. Is coupled to the respiratory chain. The protein is L-lactate dehydrogenase of Actinobacillus pleuropneumoniae serotype 5b (strain L20).